Reading from the N-terminus, the 339-residue chain is MISFNNVSKVYETGGQSVHAVEDVTLSVEKGEIFGIIGFSGAGKSTLLRLVNMLERPTAGTISIDDKEITSLSTKELRKLRQRIGMIFQSFNLFNSRTVFGNIAYPLKLAKVPKNEIKERVNELLKFVGLEDKANNYPEQLSGGQKQRVGIARALATSPDILICDEATSALDPETTTEILNLLKKVNREYNLTILLITHEMHVVKEICHRVAVMEKGKVIEEGKLFDVFTQPKTKTTQNFVRSVINDHLPESVLAKIQNGGQIYRLTFTGEETGQPVLSYIAKNYNVDVNVLYGNIIELQNVLFGNLLVELQGEQREIQKALQHLRLQVQLKEVEAHAS.

The 240-residue stretch at 2–241 folds into the ABC transporter domain; it reads ISFNNVSKVY…PKTKTTQNFV (240 aa). 38–45 is an ATP binding site; it reads GFSGAGKS.

It belongs to the ABC transporter superfamily. Methionine importer (TC 3.A.1.24) family. The complex is composed of two ATP-binding proteins (MetN), two transmembrane proteins (MetI) and a solute-binding protein (MetQ).

The protein resides in the cell membrane. The catalysed reaction is L-methionine(out) + ATP + H2O = L-methionine(in) + ADP + phosphate + H(+). It catalyses the reaction D-methionine(out) + ATP + H2O = D-methionine(in) + ADP + phosphate + H(+). Part of the ABC transporter complex MetNIQ involved in methionine import. Responsible for energy coupling to the transport system. This is Methionine import ATP-binding protein MetN 2 from Bacillus cereus (strain ATCC 10987 / NRS 248).